Consider the following 316-residue polypeptide: Ecto-ADP-ribosyltransferase 5 (316 aa).

The first 23 residues, 1–23 (MIQATLLISLSCLSFYTLGSGVR), serve as a signal peptide directing secretion. The cysteines at positions 50 and 266 are disulfide-linked. N-linked (GlcNAc...) asparagine glycosylation is present at N68. A TR mART core domain is found at 70 to 261 (TRLRESWETA…MTLSSSDQMC (192 aa)). Y107 lines the NAD(+) pocket. An N-linked (GlcNAc...) asparagine glycan is attached at N109. Residues R168 and Q188 each contribute to the NAD(+) site. Residue R168 is part of the active site. S191 is an active-site residue. S222 serves as a coordination point for NAD(+). The active site involves E229. Residues N242 and N248 are each glycosylated (N-linked (GlcNAc...) asparagine).

The protein belongs to the Arg-specific ADP-ribosyltransferase family.

The protein localises to the secreted. It is found in the membrane. The enzyme catalyses L-arginyl-[protein] + NAD(+) = N(omega)-(ADP-D-ribosyl)-L-arginyl-[protein] + nicotinamide + H(+). The sequence is that of Ecto-ADP-ribosyltransferase 5 (ART5) from Bos taurus (Bovine).